Consider the following 156-residue polypeptide: Ribosome maturation factor RimP (156 aa).

The protein belongs to the RimP family.

Its subcellular location is the cytoplasm. Functionally, required for maturation of 30S ribosomal subunits. In Bacillus subtilis (strain 168), this protein is Ribosome maturation factor RimP.